The chain runs to 233 residues: Glucosamine-6-phosphate deaminase (233 aa).

The Proton acceptor; for enolization step role is filled by Asp-62. The active-site For ring-opening step is the Asn-128. Residue His-130 is the Proton acceptor; for ring-opening step of the active site. The active-site For ring-opening step is the Glu-135.

Belongs to the glucosamine/galactosamine-6-phosphate isomerase family. NagB subfamily.

It catalyses the reaction alpha-D-glucosamine 6-phosphate + H2O = beta-D-fructose 6-phosphate + NH4(+). Its pathway is amino-sugar metabolism; N-acetylneuraminate degradation; D-fructose 6-phosphate from N-acetylneuraminate: step 5/5. Functionally, catalyzes the reversible isomerization-deamination of glucosamine 6-phosphate (GlcN6P) to form fructose 6-phosphate (Fru6P) and ammonium ion. In Leuconostoc citreum (strain KM20), this protein is Glucosamine-6-phosphate deaminase.